The chain runs to 192 residues: Segregation and condensation protein B (192 aa).

This sequence belongs to the ScpB family. As to quaternary structure, homodimer. Homodimerization may be required to stabilize the binding of ScpA to the Smc head domains. Component of a cohesin-like complex composed of ScpA, ScpB and the Smc homodimer, in which ScpA and ScpB bind to the head domain of Smc. The presence of the three proteins is required for the association of the complex with DNA.

The protein localises to the cytoplasm. In terms of biological role, participates in chromosomal partition during cell division. May act via the formation of a condensin-like complex containing Smc and ScpA that pull DNA away from mid-cell into both cell halves. This chain is Segregation and condensation protein B, found in Oceanobacillus iheyensis (strain DSM 14371 / CIP 107618 / JCM 11309 / KCTC 3954 / HTE831).